Here is a 597-residue protein sequence, read N- to C-terminus: Bromodomain-containing protein 9 (597 aa).

Positions 1-10 (MGKKHKKHKA) are enriched in basic residues. Disordered stretches follow at residues 1–25 (MGKK…KPLE) and 38–138 (EVTE…ENES). Basic and acidic residues-rich tracts occupy residues 11 to 25 (EWRS…KPLE) and 50 to 62 (SYYD…ERER). Ser56 is modified (phosphoserine). A compositionally biased stretch (basic residues) spans 63 to 73 (HKEKKKKKKKK). Over residues 74-85 (SEKEKHLDDEER) the composition is skewed to basic and acidic residues. Positions 86 to 97 (RKRKEEKKRKRE) are enriched in basic residues. Basic and acidic residues predominate over residues 111-126 (DPGKKVEVEPPPDRPV). One can recognise a Bromo domain in the interval 136–240 (NESTPIQQLL…HAGFKMMSKQ (105 aa)). The tract at residues 214-216 (TYN) is histone H4K5ac H4K8ac and histone H4K5bu H4K8bu binding. Residue Lys373 is modified to N6-acetyllysine; alternate. Lys373 participates in a covalent cross-link: Glycyl lysine isopeptide (Lys-Gly) (interchain with G-Cter in SUMO2); alternate. Residues 536-597 (EAQAERGGSR…SPEPAASAKT (62 aa)) are disordered. Positions 544-556 (SRPSSNLSSLSNA) are enriched in low complexity. Residues Ser566 and Ser588 each carry the phosphoserine modification.

Binds acetylated histones H3 and H4. Binds butyrylated histone H4. Component of the multiprotein chromatin-remodeling subcomplex SWI/SNF called GBAF, which includes at least BICRA or BICRAL (mutually exclusive), BRD9, SS18, the core BAF subunits, SMARCA2/BRM, SMARCA4/BRG1/BAF190A, ACTL6A/BAF53, SMARCC1/BAF155, and SMARCD1/BAF60A. Interacts (via N-terminal bromodomain) with acetylated RAD54. Interacts (via C-terminus) with RAD51.

The protein resides in the nucleus. Functionally, plays a role in chromatin remodeling and regulation of transcription. Acts as a chromatin reader that recognizes and binds acylated histones: binds histones that are acetylated and/or butyrylated. Component of SWI/SNF chromatin remodeling subcomplex GBAF that carries out key enzymatic activities, changing chromatin structure by altering DNA-histone contacts within a nucleosome in an ATP-dependent manner. Also orchestrates the RAD51-RAD54 complex formation and thereby plays a role in homologous recombination (HR). The protein is Bromodomain-containing protein 9 (BRD9) of Homo sapiens (Human).